The chain runs to 266 residues: Large ribosomal subunit protein eL8 (266 aa).

Basic residues predominate over residues 1-11 (MPKGKKAKGKK). Disordered regions lie at residues 1 to 28 (MPKG…KKVV) and 105 to 134 (ETKQ…KRPP). Basic and acidic residues predominate over residues 116–130 (ARAEQKAAGKGDAPT).

It belongs to the eukaryotic ribosomal protein eL8 family. In terms of assembly, component of the large ribosomal subunit.

Its subcellular location is the cytoplasm. Component of the large ribosomal subunit. The ribosome is a large ribonucleoprotein complex responsible for the synthesis of proteins in the cell. This chain is Large ribosomal subunit protein eL8 (rpl7a), found in Takifugu rubripes (Japanese pufferfish).